A 449-amino-acid chain; its full sequence is Asparagine--tRNA ligase (449 aa).

Belongs to the class-II aminoacyl-tRNA synthetase family. As to quaternary structure, homodimer.

Its subcellular location is the cytoplasm. It carries out the reaction tRNA(Asn) + L-asparagine + ATP = L-asparaginyl-tRNA(Asn) + AMP + diphosphate + H(+). This is Asparagine--tRNA ligase from Mesomycoplasma hyopneumoniae (strain 7448) (Mycoplasma hyopneumoniae).